Reading from the N-terminus, the 372-residue chain is Alanine dehydrogenase 2 (372 aa).

The active site involves H95. NAD(+) is bound at residue 169–199 (KVTIIGGGQAGTNAAKIALGLGADVTILDVN).

The protein belongs to the AlaDH/PNT family.

The enzyme catalyses L-alanine + NAD(+) + H2O = pyruvate + NH4(+) + NADH + H(+). The protein operates within amino-acid degradation; L-alanine degradation via dehydrogenase pathway; NH(3) and pyruvate from L-alanine: step 1/1. Its function is as follows. May play a role in cell wall synthesis as L-alanine is an important constituent of the peptidoglycan layer. The sequence is that of Alanine dehydrogenase 2 (ald2) from Staphylococcus aureus (strain COL).